A 470-amino-acid chain; its full sequence is Flavin-containing monooxygenase FMO GS-OX-like 6 (470 aa).

Residue 17–22 participates in FAD binding; it reads GAGAAG. Residue 214 to 219 coordinates NADP(+); it reads GYQSSG.

It belongs to the FMO family. FAD is required as a cofactor.

In terms of biological role, catalyzes the conversion of methylthioalkyl glucosinolates of any chain length into methylsulfinylalkyl glucosinolates. This chain is Flavin-containing monooxygenase FMO GS-OX-like 6, found in Arabidopsis thaliana (Mouse-ear cress).